Here is a 450-residue protein sequence, read N- to C-terminus: Protein phosphatase 1F (450 aa).

In terms of domain architecture, PPM-type phosphatase spans 152–409; sequence LVSIHAIRNT…DNITVMVVFL (258 aa). Residues aspartate 194, glycine 195, aspartate 356, and aspartate 400 each coordinate Mn(2+). Positions 420–450 are disordered; sequence GQGAGGAQADVGSQDLSTGLSELEINTSQRS. A compositionally biased stretch (polar residues) spans 433–450; sequence QDLSTGLSELEINTSQRS. The residue at position 450 (serine 450) is a Phosphoserine.

The protein belongs to the PP2C family. As to quaternary structure, associates with FEM1B. Requires Mg(2+) as cofactor. Mn(2+) serves as cofactor.

It catalyses the reaction O-phospho-L-seryl-[protein] + H2O = L-seryl-[protein] + phosphate. It carries out the reaction O-phospho-L-threonyl-[protein] + H2O = L-threonyl-[protein] + phosphate. Functionally, dephosphorylates and concomitantly deactivates CaM-kinase II activated upon autophosphorylation, and CaM-kinases IV and I activated upon phosphorylation by CaM-kinase kinase. Promotes apoptosis. The polypeptide is Protein phosphatase 1F (Ppm1f) (Rattus norvegicus (Rat)).